The chain runs to 146 residues: Large ribosomal subunit protein uL15 (146 aa).

The span at 1 to 13 shows a compositional bias: basic and acidic residues; the sequence is MKLHELRPAEGSK. A disordered region spans residues 1–54; sequence MKLHELRPAEGSKKAPKRVGRGNGSGLGKTAGKGHKGQNARSGGGVRPGFEGGQ. 2 stretches are compositionally biased toward gly residues: residues 21-31 and 42-52; these read RGNGSGLGKTA and SGGGVRPGFEG.

The protein belongs to the universal ribosomal protein uL15 family. Part of the 50S ribosomal subunit.

In terms of biological role, binds to the 23S rRNA. The protein is Large ribosomal subunit protein uL15 of Clostridium novyi (strain NT).